Here is a 335-residue protein sequence, read N- to C-terminus: Ketol-acid reductoisomerase (NADP(+)) (335 aa).

The KARI N-terminal Rossmann domain maps to 5-185 (SKIYTDKDSN…GATRAGVIPT (181 aa)). NADP(+) is bound by residues 28-31 (YGSQ), serine 56, and 86-89 (DMVQ). Residue histidine 111 is part of the active site. Glycine 137 serves as a coordination point for NADP(+). One can recognise a KARI C-terminal knotted domain in the interval 186–331 (TFKEETETDL…NQLKDLIQKG (146 aa)). Mg(2+) contacts are provided by aspartate 194, glutamate 198, glutamate 230, and glutamate 234. Serine 255 is a substrate binding site.

Belongs to the ketol-acid reductoisomerase family. Mg(2+) is required as a cofactor.

The enzyme catalyses (2R)-2,3-dihydroxy-3-methylbutanoate + NADP(+) = (2S)-2-acetolactate + NADPH + H(+). It carries out the reaction (2R,3R)-2,3-dihydroxy-3-methylpentanoate + NADP(+) = (S)-2-ethyl-2-hydroxy-3-oxobutanoate + NADPH + H(+). Its pathway is amino-acid biosynthesis; L-isoleucine biosynthesis; L-isoleucine from 2-oxobutanoate: step 2/4. The protein operates within amino-acid biosynthesis; L-valine biosynthesis; L-valine from pyruvate: step 2/4. Involved in the biosynthesis of branched-chain amino acids (BCAA). Catalyzes an alkyl-migration followed by a ketol-acid reduction of (S)-2-acetolactate (S2AL) to yield (R)-2,3-dihydroxy-isovalerate. In the isomerase reaction, S2AL is rearranged via a Mg-dependent methyl migration to produce 3-hydroxy-3-methyl-2-ketobutyrate (HMKB). In the reductase reaction, this 2-ketoacid undergoes a metal-dependent reduction by NADPH to yield (R)-2,3-dihydroxy-isovalerate. The polypeptide is Ketol-acid reductoisomerase (NADP(+)) (Saccharolobus islandicus (strain M.16.27) (Sulfolobus islandicus)).